The primary structure comprises 203 residues: ATP-dependent Clp protease proteolytic subunit 1 (203 aa).

The active-site Nucleophile is S103. H128 is an active-site residue.

Belongs to the peptidase S14 family. In terms of assembly, fourteen ClpP subunits assemble into 2 heptameric rings which stack back to back to give a disk-like structure with a central cavity, resembling the structure of eukaryotic proteasomes.

The protein resides in the cytoplasm. The enzyme catalyses Hydrolysis of proteins to small peptides in the presence of ATP and magnesium. alpha-casein is the usual test substrate. In the absence of ATP, only oligopeptides shorter than five residues are hydrolyzed (such as succinyl-Leu-Tyr-|-NHMec, and Leu-Tyr-Leu-|-Tyr-Trp, in which cleavage of the -Tyr-|-Leu- and -Tyr-|-Trp bonds also occurs).. Its function is as follows. Cleaves peptides in various proteins in a process that requires ATP hydrolysis. Has a chymotrypsin-like activity. Plays a major role in the degradation of misfolded proteins. In Treponema pallidum (strain Nichols), this protein is ATP-dependent Clp protease proteolytic subunit 1.